A 404-amino-acid chain; its full sequence is Cysteine desulfurase IscS (404 aa).

Residues 75–76, Asn-155, Gln-183, and 203–205 each bind pyridoxal 5'-phosphate; these read AT and SAH. Lys-206 carries the N6-(pyridoxal phosphate)lysine modification. Residue Thr-243 coordinates pyridoxal 5'-phosphate. The active-site Cysteine persulfide intermediate is Cys-328. Cys-328 serves as a coordination point for [2Fe-2S] cluster.

It belongs to the class-V pyridoxal-phosphate-dependent aminotransferase family. NifS/IscS subfamily. In terms of assembly, homodimer. Forms a heterotetramer with IscU, interacts with other sulfur acceptors. It depends on pyridoxal 5'-phosphate as a cofactor.

It is found in the cytoplasm. It catalyses the reaction (sulfur carrier)-H + L-cysteine = (sulfur carrier)-SH + L-alanine. The protein operates within cofactor biosynthesis; iron-sulfur cluster biosynthesis. Functionally, master enzyme that delivers sulfur to a number of partners involved in Fe-S cluster assembly, tRNA modification or cofactor biosynthesis. Catalyzes the removal of elemental sulfur atoms from cysteine to produce alanine. Functions as a sulfur delivery protein for Fe-S cluster synthesis onto IscU, an Fe-S scaffold assembly protein, as well as other S acceptor proteins. The sequence is that of Cysteine desulfurase IscS from Colwellia psychrerythraea (strain 34H / ATCC BAA-681) (Vibrio psychroerythus).